Here is a 473-residue protein sequence, read N- to C-terminus: Phosphatidylserine synthase 1 (473 aa).

Position 2 is an N-acetylalanine (Ala-2). Topologically, residues 2–35 (ASCVGSRTLSKDDVNYRMHFRMINEQQVEDITID) are cytoplasmic. Residues 36 to 56 (FFYRPHTITLLSFTIISLMYF) traverse the membrane as a helical segment. Topologically, residues 57 to 72 (AFTRDDCVPEDNIWRG) are lumenal. A helical transmembrane segment spans residues 73-93 (ILSVIFFFLIISVLAFPNGPF). At 94–102 (TRPHPALWR) the chain is on the cytoplasmic side. A helical membrane pass occupies residues 103–123 (MVFGLSVLYFLFLVFLLFLNF). Residues 124-186 (EQVKSLMYWL…AMKALLIRSY (63 aa)) lie on the Lumenal side of the membrane. The chain crosses the membrane as a helical span at residues 187 to 207 (GLCWTISITWELTELFFMHLL). The Cytoplasmic segment spans residues 208–216 (PNFAECWWD). Residues 217-237 (QVILDILLCNGGGIWLGMVVC) form a helical membrane-spanning segment. The Lumenal segment spans residues 238 to 286 (RFLEMRTYHWASFKDIHTTTGKIKRAVLQFTPASWTYVRWFDPKSSFQR). The helical transmembrane segment at 287-307 (VAGIYLFMIIWQLTELNTFFL) threads the bilayer. The Cytoplasmic portion of the chain corresponds to 308–319 (KHIFVFQASHPL). The chain crosses the membrane as a helical span at residues 320–342 (SWCRILFIGCITAPTVRQYYAYL). Over 343-355 (TDTQCKRVGTQCW) the chain is Lumenal. A helical membrane pass occupies residues 356-376 (VFGVIGFLEAIVCIKFGQDLF). Residues 377-383 (SKTQILY) are Cytoplasmic-facing. A helical transmembrane segment spans residues 384-404 (VVLWLLCVAFTTFLCLYGMVW). Residues 405–473 (YAEHYGHREK…SKVTNGVGKK (69 aa)) lie on the Lumenal side of the membrane. A phosphoserine mark is found at Ser-417, Ser-425, Ser-442, and Ser-454. Residues 430–473 (WYHGKGSKGSEDSPPKHSNNNESHSSRRRNRHSKSKVTNGVGKK) are disordered. A compositionally biased stretch (basic residues) spans 455-464 (SRRRNRHSKS).

Belongs to the phosphatidyl serine synthase family.

Its subcellular location is the endoplasmic reticulum membrane. The catalysed reaction is a 1,2-diacyl-sn-glycero-3-phosphoethanolamine + L-serine = a 1,2-diacyl-sn-glycero-3-phospho-L-serine + ethanolamine. The enzyme catalyses a 1,2-diacyl-sn-glycero-3-phosphocholine + L-serine = a 1,2-diacyl-sn-glycero-3-phospho-L-serine + choline. The protein operates within phospholipid metabolism; phosphatidylserine biosynthesis. In terms of biological role, catalyzes a base-exchange reaction in which the polar head group of phosphatidylethanolamine (PE) or phosphatidylcholine (PC) is replaced by L-serine. Catalyzes mainly the conversion of phosphatidylcholine but also converts, in vitro and to a lesser extent, phosphatidylethanolamine. In Rattus norvegicus (Rat), this protein is Phosphatidylserine synthase 1 (Ptdss1).